A 119-amino-acid chain; its full sequence is NADH-quinone oxidoreductase subunit A (119 aa).

The next 3 helical transmembrane spans lie at Tyr-7–Gly-27, Leu-63–Val-83, and Ile-88–Ala-108.

This sequence belongs to the complex I subunit 3 family. In terms of assembly, NDH-1 is composed of 14 different subunits. Subunits NuoA, H, J, K, L, M, N constitute the membrane sector of the complex.

The protein localises to the cell inner membrane. The catalysed reaction is a quinone + NADH + 5 H(+)(in) = a quinol + NAD(+) + 4 H(+)(out). NDH-1 shuttles electrons from NADH, via FMN and iron-sulfur (Fe-S) centers, to quinones in the respiratory chain. The immediate electron acceptor for the enzyme in this species is believed to be ubiquinone. Couples the redox reaction to proton translocation (for every two electrons transferred, four hydrogen ions are translocated across the cytoplasmic membrane), and thus conserves the redox energy in a proton gradient. The polypeptide is NADH-quinone oxidoreductase subunit A (Burkholderia mallei (strain NCTC 10247)).